The primary structure comprises 360 residues: DNA replication and repair protein RecF (360 aa).

30 to 37 lines the ATP pocket; sequence GQNGSGKT.

This sequence belongs to the RecF family.

It is found in the cytoplasm. Its function is as follows. The RecF protein is involved in DNA metabolism; it is required for DNA replication and normal SOS inducibility. RecF binds preferentially to single-stranded, linear DNA. It also seems to bind ATP. The protein is DNA replication and repair protein RecF of Shewanella frigidimarina (strain NCIMB 400).